The primary structure comprises 99 residues: MSDLCGGLPPDICEQLTKEEQFIKIKVEKRRYGKEVTIVEGISNDETELKKIASELKSKLAAGGTVKNGKIELQGDHRDRVKELLIKMGFPESNILVIE.

This sequence belongs to the SUI1 family.

This chain is Protein translation factor SUI1 homolog, found in Sulfolobus acidocaldarius (strain ATCC 33909 / DSM 639 / JCM 8929 / NBRC 15157 / NCIMB 11770).